An 823-amino-acid polypeptide reads, in one-letter code: Valine--tRNA ligase (823 aa).

Residue K547 participates in ATP binding.

The protein belongs to the class-I aminoacyl-tRNA synthetase family. ValS type 2 subfamily.

The protein resides in the cytoplasm. The enzyme catalyses tRNA(Val) + L-valine + ATP = L-valyl-tRNA(Val) + AMP + diphosphate. In terms of biological role, catalyzes the attachment of valine to tRNA(Val). As ValRS can inadvertently accommodate and process structurally similar amino acids such as threonine, to avoid such errors, it has a 'posttransfer' editing activity that hydrolyzes mischarged Thr-tRNA(Val) in a tRNA-dependent manner. The chain is Valine--tRNA ligase (valS) from Aeropyrum pernix (strain ATCC 700893 / DSM 11879 / JCM 9820 / NBRC 100138 / K1).